We begin with the raw amino-acid sequence, 297 residues long: MAGAASPDHLFGLRNSFYVGAYQAVITGVQAIPARAALSPDALAERDSLLYRSYIAIGSHQLVIDEIGPGAATPLQAVRLLTVYLSGGAGGKESAIRKLNELLADDAVGSNPILRLVAGTVLMHERDYAGALKHTNSGGTMELLAMNVQICLQMHRSDHAEKQLRIMQQLDEDHTLTQLANAWVDLVMGGSKIQEAHLIFQDLSEKYPATCLILNGKALCLMHMGNFEDAEGLLLESLNKDAKDAETLANLVVCSLNLGKSASRYLNQLKLAHPDHMLVKRMSSAEDSFDRACQAIS.

It belongs to the COPE family. Oligomeric complex that consists of at least the alpha, beta, beta', gamma, delta, epsilon and zeta subunits.

The protein resides in the cytoplasm. It localises to the golgi apparatus membrane. Its subcellular location is the cytoplasmic vesicle. It is found in the COPI-coated vesicle membrane. Its function is as follows. The coatomer is a cytosolic protein complex that binds to dilysine motifs and reversibly associates with Golgi non-clathrin-coated vesicles, which further mediate biosynthetic protein transport from the ER, via the Golgi up to the trans Golgi network. The coatomer complex is required for budding from Golgi membranes, and is essential for the retrograde Golgi-to-ER transport of dilysine-tagged proteins. This is Coatomer subunit epsilon-2 from Oryza sativa subsp. japonica (Rice).